Consider the following 205-residue polypeptide: Urease accessory protein UreG (205 aa).

Position 12–19 (12–19 (GPVGSGKT)) interacts with GTP.

It belongs to the SIMIBI class G3E GTPase family. UreG subfamily. Homodimer. UreD, UreF and UreG form a complex that acts as a GTP-hydrolysis-dependent molecular chaperone, activating the urease apoprotein by helping to assemble the nickel containing metallocenter of UreC. The UreE protein probably delivers the nickel.

It localises to the cytoplasm. Functionally, facilitates the functional incorporation of the urease nickel metallocenter. This process requires GTP hydrolysis, probably effectuated by UreG. This is Urease accessory protein UreG from Pseudomonas savastanoi pv. phaseolicola (strain 1448A / Race 6) (Pseudomonas syringae pv. phaseolicola (strain 1448A / Race 6)).